A 130-amino-acid polypeptide reads, in one-letter code: Small ribosomal subunit protein uS11 (130 aa).

The protein belongs to the universal ribosomal protein uS11 family. Part of the 30S ribosomal subunit. Interacts with proteins S7 and S18. Binds to IF-3.

In terms of biological role, located on the platform of the 30S subunit, it bridges several disparate RNA helices of the 16S rRNA. Forms part of the Shine-Dalgarno cleft in the 70S ribosome. The sequence is that of Small ribosomal subunit protein uS11 from Thiobacillus denitrificans (strain ATCC 25259 / T1).